A 221-amino-acid polypeptide reads, in one-letter code: MPGKPVLHYFDGRGRMEPIRWLLAAAGVEFEEQFLKTRDDLARLRNDGSLMFQQVPMVEIDGMKLVQTRAILNYIATKYNLYGKDMKERALIDMYAEGVADLDEIVLHYPYIPPGEKEASLAKIKDKARNRYFPAFEKVLKSHGQDYLVGNRLSRADVYLVQVLYHVEELDPSALANFPLLKALRTRVSNLPTVKKFLQPGSQRKPLEDEKCVESAVKIFS.

Residues 3–83 (GKPVLHYFDG…YIATKYNLYG (81 aa)) enclose the GST N-terminal domain. The residue at position 4 (Lys4) is an N6-succinyllysine. Glutathione is bound by residues Tyr9, Arg45, 54-55 (QV), and 67-68 (QT). Positions 85 to 207 (DMKERALIDM…LQPGSQRKPL (123 aa)) constitute a GST C-terminal domain.

The protein belongs to the GST superfamily. Alpha family. Heterodimer of YC1 and YC2.

The protein resides in the cytoplasm. The enzyme catalyses RX + glutathione = an S-substituted glutathione + a halide anion + H(+). It catalyses the reaction androst-5-ene-3,17-dione = androst-4-ene-3,17-dione. The catalysed reaction is pregn-5-ene-3,20-dione = progesterone. In terms of biological role, conjugation of reduced glutathione to a wide number of exogenous and endogenous hydrophobic electrophiles. Catalyzes isomerization reactions that contribute to the biosynthesis of steroid hormones. Efficiently catalyze obligatory double-bond isomerizations of delta(5)-androstene-3,17-dione and delta(5)-pregnene-3,20-dione, precursors to testosterone and progesterone, respectively. Has substantial activity toward aflatoxin B1-8,9-epoxide. This is Glutathione S-transferase alpha-3 from Rattus norvegicus (Rat).